The sequence spans 185 residues: Threonylcarbamoyl-AMP synthase (185 aa).

Positions 3–185 (EQAPDEVQEI…VDAISGKVLR (183 aa)) constitute a YrdC-like domain.

The protein belongs to the SUA5 family. TsaC subfamily.

The protein localises to the cytoplasm. The catalysed reaction is L-threonine + hydrogencarbonate + ATP = L-threonylcarbamoyladenylate + diphosphate + H2O. In terms of biological role, required for the formation of a threonylcarbamoyl group on adenosine at position 37 (t(6)A37) in tRNAs that read codons beginning with adenine. Catalyzes the conversion of L-threonine, HCO(3)(-)/CO(2) and ATP to give threonylcarbamoyl-AMP (TC-AMP) as the acyladenylate intermediate, with the release of diphosphate. The polypeptide is Threonylcarbamoyl-AMP synthase (Shewanella sediminis (strain HAW-EB3)).